Consider the following 455-residue polypeptide: Probable circularly permuted 1,3-beta-glucanase TOS1 (455 aa).

Residues 1–23 (MLQKLSMTALVGLFSSVVSLVNA) form the signal peptide. The tract at residues 158–221 (TADSTNTVVG…SSSSSSNTNG (64 aa)) is disordered. The span at 172–189 (SSYTKDSTVLSSSAQAVE) shows a compositional bias: polar residues. Low complexity predominate over residues 190–219 (TSESQSSISSSKTTSSAAAASSSSSSSSNT). Residue Asn-236 is glycosylated (N-linked (GlcNAc...) asparagine). The ExDxxE motif motif lies at 372–377 (EMDLFE). An N-linked (GlcNAc...) asparagine glycan is attached at Asn-417.

The protein belongs to the PGA52 family.

The protein localises to the secreted. It localises to the cell wall. The catalysed reaction is Hydrolysis of (1-&gt;3)-beta-D-glucosidic linkages in (1-&gt;3)-beta-D-glucans.. Its function is as follows. Probable circularly permuted 1,3-beta-glucanase involved in cell wall modification through beta-1,3-glucan network alterations such as increased branching or remodeling. This chain is Probable circularly permuted 1,3-beta-glucanase TOS1, found in Saccharomyces cerevisiae (strain ATCC 204508 / S288c) (Baker's yeast).